The primary structure comprises 44 residues: Photosystem II reaction center protein K (44 aa).

Positions 1-7 are excised as a propeptide; it reads MESLLLA. The helical transmembrane segment at 23–43 threads the bilayer; that stretch reads LPIIPVFFLLLAFVWQAAIGF.

Belongs to the PsbK family. In terms of assembly, PSII is composed of 1 copy each of membrane proteins PsbA, PsbB, PsbC, PsbD, PsbE, PsbF, PsbH, PsbI, PsbJ, PsbK, PsbL, PsbM, PsbT, PsbX, PsbY, PsbZ, Psb30/Ycf12, at least 3 peripheral proteins of the oxygen-evolving complex and a large number of cofactors. It forms dimeric complexes.

It localises to the plastid. It is found in the chloroplast thylakoid membrane. Its function is as follows. One of the components of the core complex of photosystem II (PSII). PSII is a light-driven water:plastoquinone oxidoreductase that uses light energy to abstract electrons from H(2)O, generating O(2) and a proton gradient subsequently used for ATP formation. It consists of a core antenna complex that captures photons, and an electron transfer chain that converts photonic excitation into a charge separation. This Trieres chinensis (Marine centric diatom) protein is Photosystem II reaction center protein K.